The primary structure comprises 62 residues: Ferredoxin-2 (62 aa).

4Fe-4S ferredoxin-type domains follow at residues 2–28 (AHRI…SAGD) and 29–62 (SIYV…IIKV). [4Fe-4S] cluster is bound by residues Cys9, Cys12, Cys15, Cys19, Cys38, Cys41, Cys50, and Cys54.

Requires [4Fe-4S] cluster as cofactor.

Its function is as follows. Ferredoxins are iron-sulfur proteins that transfer electrons in a wide variety of metabolic reactions. The sequence is that of Ferredoxin-2 from Chlorobaculum tepidum (strain ATCC 49652 / DSM 12025 / NBRC 103806 / TLS) (Chlorobium tepidum).